Reading from the N-terminus, the 261-residue chain is Segregation and condensation protein A (261 aa).

Belongs to the ScpA family. As to quaternary structure, component of a cohesin-like complex composed of ScpA, ScpB and the Smc homodimer, in which ScpA and ScpB bind to the head domain of Smc. The presence of the three proteins is required for the association of the complex with DNA.

It is found in the cytoplasm. In terms of biological role, participates in chromosomal partition during cell division. May act via the formation of a condensin-like complex containing Smc and ScpB that pull DNA away from mid-cell into both cell halves. This Leptospira interrogans serogroup Icterohaemorrhagiae serovar copenhageni (strain Fiocruz L1-130) protein is Segregation and condensation protein A.